The sequence spans 298 residues: Acetylglutamate kinase (298 aa).

Substrate-binding positions include 61-62 (GG), R83, and N188.

It belongs to the acetylglutamate kinase family. ArgB subfamily.

The protein resides in the cytoplasm. It carries out the reaction N-acetyl-L-glutamate + ATP = N-acetyl-L-glutamyl 5-phosphate + ADP. Its pathway is amino-acid biosynthesis; L-arginine biosynthesis; N(2)-acetyl-L-ornithine from L-glutamate: step 2/4. Its function is as follows. Catalyzes the ATP-dependent phosphorylation of N-acetyl-L-glutamate. The protein is Acetylglutamate kinase of Syntrophobacter fumaroxidans (strain DSM 10017 / MPOB).